A 452-amino-acid chain; its full sequence is GTPase Der (452 aa).

EngA-type G domains lie at 4–169 and 177–352; these read PIVA…PTTE and IKVA…ASHR. GTP contacts are provided by residues 10–17, 57–61, 120–123, 183–190, 230–234, and 295–298; these read GRPNVGKS, DTGGL, NKCE, DTAGI, and NKWD. The region spanning 353-438 is the KH-like domain; it reads RRVSTAVINE…PIRLIWRGKS (86 aa).

This sequence belongs to the TRAFAC class TrmE-Era-EngA-EngB-Septin-like GTPase superfamily. EngA (Der) GTPase family. Associates with the 50S ribosomal subunit.

GTPase that plays an essential role in the late steps of ribosome biogenesis. The protein is GTPase Der of Gloeothece citriformis (strain PCC 7424) (Cyanothece sp. (strain PCC 7424)).